A 122-amino-acid chain; its full sequence is Large ribosomal subunit protein uL14 (122 aa).

This sequence belongs to the universal ribosomal protein uL14 family. In terms of assembly, part of the 50S ribosomal subunit. Forms a cluster with proteins L3 and L19. In the 70S ribosome, L14 and L19 interact and together make contacts with the 16S rRNA in bridges B5 and B8.

In terms of biological role, binds to 23S rRNA. Forms part of two intersubunit bridges in the 70S ribosome. The sequence is that of Large ribosomal subunit protein uL14 from Clostridium botulinum (strain Alaska E43 / Type E3).